The primary structure comprises 529 residues: Probable DNA helicase MPN_340 (529 aa).

A UvrD-like helicase ATP-binding domain is found at 2–285; sequence EHLNQEQKAA…FYTTQNYRSI (284 aa). 23–30 is an ATP binding site; the sequence is SGAGTGKT.

Belongs to the helicase family. UvrD subfamily.

The catalysed reaction is Couples ATP hydrolysis with the unwinding of duplex DNA by translocating in the 3'-5' direction.. The enzyme catalyses ATP + H2O = ADP + phosphate + H(+). The sequence is that of Probable DNA helicase MPN_340 from Mycoplasma pneumoniae (strain ATCC 29342 / M129 / Subtype 1) (Mycoplasmoides pneumoniae).